The primary structure comprises 32 residues: Ranatuerin-2CSa (32 aa).

A disulfide bond links Cys27 and Cys32.

As to expression, expressed by the skin glands.

The protein resides in the secreted. It is found in the target cell membrane. Its function is as follows. Antibacterial peptide with amphipathic alpha-helical structure. Active against E.coli ATCC 25726 (MIC=4-5 uM) and S.aureus ATCC 25923 (MIC=8-10 uM). Has a weak hemolytic activity on human erythrocytes (LC(50)=150-160 uM). This chain is Ranatuerin-2CSa, found in Rana cascadae (Cascades frog).